The following is a 1287-amino-acid chain: Cell adhesion molecule-related/down-regulated by oncogenes (1287 aa).

The signal sequence occupies residues 1-25 (MHPDLGPLCTLLYVTLTILCSSVSS). The Extracellular portion of the chain corresponds to 26 to 963 (DLAPYFTSEP…PATSPARSSD (938 aa)). Ig-like C2-type domains are found at residues 29 to 114 (PYFT…ATVS), 120 to 204 (DFGS…LKVE), 225 to 303 (PTHS…KYVT), 310 to 396 (EHAS…GRLE), and 405 to 516 (PVII…ASLM). A disulfide bridge connects residues C50 and C97. Residues N88, N100, N180, N287, N294, N342, and N427 are each glycosylated (N-linked (GlcNAc...) asparagine). 2 disulfide bridges follow: C141-C191 and C243-C290. 2 disulfides stabilise this stretch: C333/C380 and C426/C500. Positions 531–553 (LPDAAQNDDRSKRDGSETGLLSS) are disordered. Residues 537–546 (NDDRSKRDGS) show a composition bias toward basic and acidic residues. N570 carries N-linked (GlcNAc...) asparagine glycosylation. 3 consecutive Fibronectin type-III domains span residues 579–677 (APII…SKEK), 723–821 (APDR…FPNR), and 826–926 (PITG…TKVK). N873 is a glycosylation site (N-linked (GlcNAc...) asparagine). Residues 933 to 955 (EYPVKDLSTPPNSLGSGGNVGPA) are disordered. Residues 964 to 984 (MLYLIVGCVLGVMVLILMVFI) traverse the membrane as a helical segment. Over 985–1287 (AMCLWKNRQQ…TEVLQQPRET (303 aa)) the chain is Cytoplasmic. The disordered stretch occupies residues 1268–1287 (SPPGIPLDSPTEVLQQPRET).

Part of a complex that contains BOC, CDON, NEO1, cadherins and CTNNB1. Interacts with NTN3. Interacts with PTCH1. Interacts with GAS1. Interacts with DHH, IHH and SHH. Post-translationally, N-glycosylated.

It localises to the cell membrane. Its function is as follows. Component of a cell-surface receptor complex that mediates cell-cell interactions between muscle precursor cells. Promotes differentiation of myogenic cells. The protein is Cell adhesion molecule-related/down-regulated by oncogenes (CDON) of Homo sapiens (Human).